The primary structure comprises 134 residues: MDSEYAALLERAYKLVAPKAQRRAEIPKIEVENMPRKTIIPNFGQIAKRLNRDVYFMAKFFQKELAVPGTLEGDVFTLHGEKSPKVVEAVYDRFIRYYVVCPVCNSIDTELRKEGRIFIMRCLACGASTPVRPL.

This sequence belongs to the eIF-2-beta/eIF-5 family. Heterotrimer composed of an alpha, a beta and a gamma chain.

In terms of biological role, eIF-2 functions in the early steps of protein synthesis by forming a ternary complex with GTP and initiator tRNA. The sequence is that of Translation initiation factor 2 subunit beta from Pyrobaculum aerophilum (strain ATCC 51768 / DSM 7523 / JCM 9630 / CIP 104966 / NBRC 100827 / IM2).